The following is a 455-amino-acid chain: Chromosomal replication initiator protein DnaA (455 aa).

The tract at residues 1-70 is domain I, interacts with DnaA modulators; the sequence is MTNETWVQVR…RMRLTEAGSP (70 aa). The domain II stretch occupies residues 70-113; sequence PVERLEFAVSNTPRAPLKEVKAAAPAASPARARPAPPEEDLRGA. Residues 87 to 109 are disordered; sequence KEVKAAAPAASPARARPAPPEED. A compositionally biased stretch (low complexity) spans 91 to 102; that stretch reads AAAPAASPARAR. The segment at 114 to 335 is domain III, AAA+ region; sequence PLDARFTFDS…GALTRLFAFA (222 aa). ATP contacts are provided by Gly-158, Gly-160, Lys-161, and Thr-162. The tract at residues 336-455 is domain IV, binds dsDNA; it reads SLVGREITLD…LQLLRRLLQA (120 aa).

This sequence belongs to the DnaA family. In terms of assembly, oligomerizes as a right-handed, spiral filament on DNA at oriC.

It localises to the cytoplasm. Its function is as follows. Plays an essential role in the initiation and regulation of chromosomal replication. ATP-DnaA binds to the origin of replication (oriC) to initiate formation of the DNA replication initiation complex once per cell cycle. Binds the DnaA box (a 9 base pair repeat at the origin) and separates the double-stranded (ds)DNA. Forms a right-handed helical filament on oriC DNA; dsDNA binds to the exterior of the filament while single-stranded (ss)DNA is stabiized in the filament's interior. The ATP-DnaA-oriC complex binds and stabilizes one strand of the AT-rich DNA unwinding element (DUE), permitting loading of DNA polymerase. After initiation quickly degrades to an ADP-DnaA complex that is not apt for DNA replication. Binds acidic phospholipids. The polypeptide is Chromosomal replication initiator protein DnaA (Cereibacter sphaeroides (strain ATCC 17029 / ATH 2.4.9) (Rhodobacter sphaeroides)).